We begin with the raw amino-acid sequence, 417 residues long: Glutamate-1-semialdehyde 2,1-aminomutase (417 aa).

Lys263 carries the post-translational modification N6-(pyridoxal phosphate)lysine.

It belongs to the class-III pyridoxal-phosphate-dependent aminotransferase family. HemL subfamily. Pyridoxal 5'-phosphate serves as cofactor.

The protein resides in the cytoplasm. It carries out the reaction (S)-4-amino-5-oxopentanoate = 5-aminolevulinate. Its pathway is porphyrin-containing compound metabolism; protoporphyrin-IX biosynthesis; 5-aminolevulinate from L-glutamyl-tRNA(Glu): step 2/2. The polypeptide is Glutamate-1-semialdehyde 2,1-aminomutase (Methanospirillum hungatei JF-1 (strain ATCC 27890 / DSM 864 / NBRC 100397 / JF-1)).